The following is a 299-amino-acid chain: tRNA dimethylallyltransferase (299 aa).

22 to 29 provides a ligand contact to ATP; it reads GPTASGKT. Position 24–29 (24–29) interacts with substrate; that stretch reads TASGKT. Interaction with substrate tRNA regions lie at residues 47–50 and 172–176; these read DSRQ and QRLLR.

Belongs to the IPP transferase family. Monomer. Requires Mg(2+) as cofactor.

It carries out the reaction adenosine(37) in tRNA + dimethylallyl diphosphate = N(6)-dimethylallyladenosine(37) in tRNA + diphosphate. Catalyzes the transfer of a dimethylallyl group onto the adenine at position 37 in tRNAs that read codons beginning with uridine, leading to the formation of N6-(dimethylallyl)adenosine (i(6)A). The polypeptide is tRNA dimethylallyltransferase (Endomicrobium trichonymphae).